We begin with the raw amino-acid sequence, 525 residues long: Tigger transposable element-derived protein 2 (525 aa).

An HTH psq-type domain is found at 1-52 (MLGKRKRVVLTIKDKLDIIKKLEEGISFKKLSVVYGIGESTVRDIKKNKERI). DNA-binding regions (H-T-H motif) lie at residues 28–48 (FKKL…IKKN) and 100–132 (TICA…FKQR). The HTH CENPB-type domain maps to 67–139 (KRKSMKSSTY…KQRHGIPKAA (73 aa)). In terms of domain architecture, DDE-1 spans 168–385 (LQPEQIYGAD…VKSSTITKAW (218 aa)). Residues 442 to 474 (QVLTDSESAEDQTKAAEQKPSSKSRKTELNPEK) are disordered.

This sequence belongs to the tigger transposable element derived protein family.

It localises to the nucleus. The chain is Tigger transposable element-derived protein 2 (TIGD2) from Homo sapiens (Human).